We begin with the raw amino-acid sequence, 152 residues long: 3-dehydroquinate dehydratase (152 aa).

Residue Y25 is the Proton acceptor of the active site. Residues N76, H82, and D89 each contribute to the substrate site. The active-site Proton donor is the H102. Residues L103–S104 and R113 contribute to the substrate site.

Belongs to the type-II 3-dehydroquinase family. In terms of assembly, homododecamer.

It catalyses the reaction 3-dehydroquinate = 3-dehydroshikimate + H2O. It functions in the pathway metabolic intermediate biosynthesis; chorismate biosynthesis; chorismate from D-erythrose 4-phosphate and phosphoenolpyruvate: step 3/7. Catalyzes a trans-dehydration via an enolate intermediate. This is 3-dehydroquinate dehydratase from Gloeothece citriformis (strain PCC 7424) (Cyanothece sp. (strain PCC 7424)).